A 366-amino-acid polypeptide reads, in one-letter code: Aminomethyltransferase (366 aa).

Belongs to the GcvT family. In terms of assembly, the glycine cleavage system is composed of four proteins: P, T, L and H.

The catalysed reaction is N(6)-[(R)-S(8)-aminomethyldihydrolipoyl]-L-lysyl-[protein] + (6S)-5,6,7,8-tetrahydrofolate = N(6)-[(R)-dihydrolipoyl]-L-lysyl-[protein] + (6R)-5,10-methylene-5,6,7,8-tetrahydrofolate + NH4(+). In terms of biological role, the glycine cleavage system catalyzes the degradation of glycine. The protein is Aminomethyltransferase of Moorella thermoacetica (strain ATCC 39073 / JCM 9320).